The sequence spans 213 residues: MSNYAPADPRASSNRYRYNGTCMTNPSERFDNLVGSDQSFEQLRRATFGEQPEEGIVLTTLDNAVNWIRKNSIWPMTFGLACCAIEMMSMGASRFDIARFGAEVFRPSPRQSDLMIIAGRVSQKMAPVIRHLYLQMPEPKWVISMGACATSGGVFNNYALVQGVNQYIPVDIYVPGCPPRPEQLIYAITLLQEKIQAERGSFRRALNLEPVTP.

The [4Fe-4S] cluster site is built by cysteine 82, cysteine 83, cysteine 148, and cysteine 177.

The protein belongs to the complex I 20 kDa subunit family. NDH-1 is composed of 14 different subunits. Subunits NuoB, C, D, E, F, and G constitute the peripheral sector of the complex. It depends on [4Fe-4S] cluster as a cofactor.

The protein resides in the cell inner membrane. The enzyme catalyses a quinone + NADH + 5 H(+)(in) = a quinol + NAD(+) + 4 H(+)(out). NDH-1 shuttles electrons from NADH, via FMN and iron-sulfur (Fe-S) centers, to quinones in the respiratory chain. The immediate electron acceptor for the enzyme in this species is believed to be ubiquinone. Couples the redox reaction to proton translocation (for every two electrons transferred, four hydrogen ions are translocated across the cytoplasmic membrane), and thus conserves the redox energy in a proton gradient. The chain is NADH-quinone oxidoreductase subunit B 1 from Koribacter versatilis (strain Ellin345).